The following is a 288-amino-acid chain: NAD kinase (288 aa).

Catalysis depends on aspartate 73, which acts as the Proton acceptor. Residues 73–74 (DG), arginine 78, 144–145 (NE), aspartate 174, 185–190 (TAYSLS), and alanine 209 each bind NAD(+).

Belongs to the NAD kinase family. Requires a divalent metal cation as cofactor.

Its subcellular location is the cytoplasm. It catalyses the reaction NAD(+) + ATP = ADP + NADP(+) + H(+). Its function is as follows. Involved in the regulation of the intracellular balance of NAD and NADP, and is a key enzyme in the biosynthesis of NADP. Catalyzes specifically the phosphorylation on 2'-hydroxyl of the adenosine moiety of NAD to yield NADP. In Porphyromonas gingivalis (strain ATCC BAA-308 / W83), this protein is NAD kinase.